The chain runs to 2188 residues: Phenolphthiocerol/phthiocerol polyketide synthase subunit C (2188 aa).

In terms of domain architecture, Ketosynthase family 3 (KS3) spans 34–462 (SEPIAVIGMG…GTNAHVVIEQ (429 aa)). Catalysis depends on for beta-ketoacyl synthase activity residues cysteine 210, histidine 345, and histidine 384. Positions 572–890 (VFVYSGRGSQ…NLNTTHTTHP (319 aa)) are acyltransferase. Serine 660 acts as the For malonyltransferase activity in catalysis. Residues 928–1050 (HPLLGVGVTD…ATVARAEPLA (123 aa)) form an N-terminal hotdog fold region. Residues 928 to 1093 (HPLLGVGVTD…QQHGPAFQGI (166 aa)) are dehydratase. One can recognise a PKS/mFAS DH domain in the interval 928-1223 (HPLLGVGVTD…MAVLGSGSGA (296 aa)). The active-site Proton acceptor; for dehydratase activity is the histidine 959. Residues 1067 to 1223 (EDQLDPDDLY…MAVLGSGSGA (157 aa)) form a C-terminal hotdog fold region. Aspartate 1129 serves as the catalytic Proton donor; for dehydratase activity. Residues 1467–1778 (GRLDALNVHE…SGKHTGKIVI (312 aa)) form an enoylreductase region. Residues 1802 to 1981 (GGYLIVGGMG…GINWGPWADV (180 aa)) form a beta-ketoacyl reductase region. 1803-1848 (GYLIVGGMGGLGFVVARWLAEQGAGLIVLNGRSAPSDEVAAAIAEL) provides a ligand contact to NADP(+). A Carrier domain is found at 2069 to 2145 (ERPGHLASAI…DLATALCERM (77 aa)). Residue serine 2105 is modified to O-(pantetheine 4'-phosphoryl)serine.

As to quaternary structure, homodimer. Requires NADP(+) as cofactor. Pantetheine 4'-phosphate serves as cofactor.

It catalyses the reaction icosanoyl-[(phenol)carboxyphthiodiolenone synthase] + 2 (S)-methylmalonyl-CoA + 3 malonyl-CoA + 5 NADPH + 10 H(+) = C32-carboxyphthiodiolenone-[(phenol)carboxyphthiodiolenone synthase] + 5 CO2 + 5 NADP(+) + 5 CoA + 2 H2O. The enzyme catalyses docosanoyl-[(phenol)carboxyphthiodiolenone synthase] + 2 (S)-methylmalonyl-CoA + 3 malonyl-CoA + 5 NADPH + 10 H(+) = C34-carboxyphthiodiolenone-[(phenol)carboxyphthiodiolenone synthase] + 5 CO2 + 5 NADP(+) + 5 CoA + 2 H2O. It carries out the reaction 17-(4-hydroxyphenyl)heptadecanoyl-[(phenol)carboxyphthiodiolenone synthase] + 2 (S)-methylmalonyl-CoA + 3 malonyl-CoA + 5 NADPH + 10 H(+) = C35-(phenol)carboxyphthiodiolenone-[(phenol)carboxyphthiodiolenone synthase] + 5 CO2 + 5 NADP(+) + 5 CoA + 2 H2O. The catalysed reaction is 19-(4-hydroxyphenyl)nonadecanoyl-[(phenol)carboxyphthiodiolenone synthase] + 2 (S)-methylmalonyl-CoA + 3 malonyl-CoA + 5 NADPH + 10 H(+) = C37-(phenol)carboxyphthiodiolenone-[(phenol)carboxyphthiodiolenone synthase] + 5 CO2 + 5 NADP(+) + 5 CoA + 2 H2O. The protein operates within lipid metabolism; fatty acid biosynthesis. Its function is as follows. Part of the PpsABCDE complex involved in the biosynthesis of the lipid core common to phthiocerols and phenolphthiocerols by successive additions of malonyl-CoA or methylmalonyl-CoA extender units. PpsA can accept as substrate the activated forms of either icosanoyl (C20), docosanoyl (C22) or lignoceroyl (C24) groups from FadD26, or a (4-hydroxyphenyl)-C17 or (4-hydroxyphenyl)-C19 fatty acyl from FadD29. PpsA initiates the biosynthesis and extends its substrate using a malonyl-CoA extender unit. The PpsB and PpsC proteins add the second and third malonyl-CoA extender units. PpsD adds an (R)-methylmalonyl unit and PpsE adds a second (R)-methylmalonyl unit. The incorporation of the methylmalonyl units results in formation of two branched methyl groups in the elongated product. The chain is Phenolphthiocerol/phthiocerol polyketide synthase subunit C (ppsC) from Mycobacterium bovis (strain ATCC BAA-935 / AF2122/97).